Consider the following 469-residue polypeptide: UDP-N-acetylmuramate--L-alanine ligase (469 aa).

113-119 (GTHGKTT) contacts ATP.

This sequence belongs to the MurCDEF family.

Its subcellular location is the cytoplasm. The enzyme catalyses UDP-N-acetyl-alpha-D-muramate + L-alanine + ATP = UDP-N-acetyl-alpha-D-muramoyl-L-alanine + ADP + phosphate + H(+). It participates in cell wall biogenesis; peptidoglycan biosynthesis. Cell wall formation. In Neisseria meningitidis serogroup C / serotype 2a (strain ATCC 700532 / DSM 15464 / FAM18), this protein is UDP-N-acetylmuramate--L-alanine ligase.